The following is a 310-amino-acid chain: HPr kinase/phosphorylase (310 aa).

Catalysis depends on residues H138 and K159. ATP is bound at residue 153 to 160 (GASGIGKS). S160 contacts Mg(2+). The active-site Proton acceptor; for phosphorylation activity. Proton donor; for dephosphorylation activity is the D177. The interval 201–210 (IEIRGVGIID) is important for the catalytic mechanism of both phosphorylation and dephosphorylation. Residue E202 participates in Mg(2+) binding. R243 is a catalytic residue. Residues 264-269 (PVKTGR) are important for the catalytic mechanism of dephosphorylation.

The protein belongs to the HPrK/P family. Homohexamer. It depends on Mg(2+) as a cofactor.

It carries out the reaction [HPr protein]-L-serine + ATP = [HPr protein]-O-phospho-L-serine + ADP + H(+). The enzyme catalyses [HPr protein]-O-phospho-L-serine + phosphate + H(+) = [HPr protein]-L-serine + diphosphate. Catalyzes the ATP- as well as the pyrophosphate-dependent phosphorylation of a specific serine residue in HPr, a phosphocarrier protein of the phosphoenolpyruvate-dependent sugar phosphotransferase system (PTS). HprK/P also catalyzes the pyrophosphate-producing, inorganic phosphate-dependent dephosphorylation (phosphorolysis) of seryl-phosphorylated HPr (P-Ser-HPr). The two antagonistic activities of HprK/P are regulated by several intracellular metabolites, which change their concentration in response to the absence or presence of rapidly metabolisable carbon sources (glucose, fructose, etc.) in the growth medium. Therefore, by controlling the phosphorylation state of HPr, HPrK/P is a sensor enzyme that plays a major role in the regulation of carbon metabolism and sugar transport: it mediates carbon catabolite repression (CCR), and regulates PTS-catalyzed carbohydrate uptake and inducer exclusion. This chain is HPr kinase/phosphorylase, found in Lactococcus lactis subsp. cremoris (strain MG1363).